Reading from the N-terminus, the 592-residue chain is Putative D-/L-hydantoinase subunit B (592 aa).

The protein belongs to the HyuB family. May form a complex with HyuA.

Its function is as follows. Involved in the asymmetric conversion of racemic 5-substituted hydantoins to the corresponding L-amino acids. HyuA and HyuB are both required for the conversion of D- and L-5-substituted hydantoins to corresponding N-carbamoyl-D- and N-carbamoyl-L-amino acids, respectively. The polypeptide is Putative D-/L-hydantoinase subunit B (Pseudomonas sp. (strain NS671)).